The primary structure comprises 241 residues: uncharacterized protein (241 aa).

Residues 78–80, G111, I131, and 138–140 contribute to the S-adenosyl-L-methionine site; these read TSA and SSL.

This sequence belongs to the class IV-like SAM-binding methyltransferase superfamily. RNA methyltransferase TrmH family.

This is an uncharacterized protein from Haemophilus influenzae (strain ATCC 51907 / DSM 11121 / KW20 / Rd).